Consider the following 360-residue polypeptide: MQTLHVELGERRYPIFIGSQLDPKQLLEPYIHGQQVMIVSNVTVAPLYLSHYQEALESLGKTVATCILPDGEKYKDIQHLNLIFDALLEAGFNRDCTVLALGGGVIGDMAGFASACFQRGVYFVQVPTTLLSQVDSSVGGKTGINHPLGKNMLGAFQQPQVVLADMAQLNTLPERELSAGLAEVIKYALLGDEDFLVWLEENMDGLVARDADLLAEAVYRSCAHKARIVANDEKEQGERALLNLGHTFGHAIESYLGYGTWLHGEAVATGMVMAADLSQRLGWISNEDVARTKKIIQRANLPISCPQIPLDDFLGHMAHDKKVLNGQLRLVLLKQLGQAVITKDFDVELMKQAILANQHG.

NAD(+) is bound by residues 70-75, 104-108, 128-129, Lys-141, and Lys-150; these read DGEKYK, GVIGD, and TT. Glu-183, His-246, and His-263 together coordinate Zn(2+).

The protein belongs to the sugar phosphate cyclases superfamily. Dehydroquinate synthase family. It depends on Co(2+) as a cofactor. Requires Zn(2+) as cofactor. NAD(+) serves as cofactor.

It localises to the cytoplasm. The catalysed reaction is 7-phospho-2-dehydro-3-deoxy-D-arabino-heptonate = 3-dehydroquinate + phosphate. It functions in the pathway metabolic intermediate biosynthesis; chorismate biosynthesis; chorismate from D-erythrose 4-phosphate and phosphoenolpyruvate: step 2/7. Functionally, catalyzes the conversion of 3-deoxy-D-arabino-heptulosonate 7-phosphate (DAHP) to dehydroquinate (DHQ). The sequence is that of 3-dehydroquinate synthase from Acinetobacter baumannii (strain SDF).